A 79-amino-acid chain; its full sequence is RNA-binding protein Hfq (79 aa).

The region spanning 10–69 (DPFLNALRKEHVPVSIYLVNGIKLQGNIESFDQYVVLLRNTVTQMVYKHAISTVVPARPV) is the Sm domain.

Belongs to the Hfq family. As to quaternary structure, homohexamer.

RNA chaperone that binds small regulatory RNA (sRNAs) and mRNAs to facilitate mRNA translational regulation in response to envelope stress, environmental stress and changes in metabolite concentrations. Also binds with high specificity to tRNAs. The sequence is that of RNA-binding protein Hfq from Burkholderia cenocepacia (strain HI2424).